Here is a 226-residue protein sequence, read N- to C-terminus: Lysoplasmalogenase TMEM86B (226 aa).

Over 1–23 the chain is Cytoplasmic; the sequence is MDPGKEGLPRKPRFSAQQLHVGK. A helical transmembrane segment spans residues 24-40; sequence WLSPFFFTCAVYFLLWI. Over 41 to 46 the chain is Extracellular; that stretch reads PDDQPS. A helical membrane pass occupies residues 47–64; the sequence is WVGALVKCLPVLSLVVFL. At 65-76 the chain is on the cytoplasmic side; that stretch reads RAVDAGGGYSAR. A helical membrane pass occupies residues 77–93; sequence LQGALLCSAVGDACLVW. Over 94-99 the chain is Extracellular; sequence PEAFLH. Residues 100–117 traverse the membrane as a helical segment; sequence GVAAFAAAHLLYLWAFGL. The Cytoplasmic segment spans residues 118-123; sequence TPLQPG. A helical transmembrane segment spans residues 124-140; the sequence is LLLLVILAALPYYGLLL. The Extracellular portion of the chain corresponds to 141–146; it reads WHLPPD. The chain crosses the membrane as a helical span at residues 147–163; sequence LVLALTAYSLALATMLW. Residues 164 to 171 are Cytoplasmic-facing; sequence RGLARGGS. A helical transmembrane segment spans residues 172-188; sequence TGWGALLFTLSDTTLAW. Over 189-199 the chain is Extracellular; the sequence is NAFAQPLPHAR. The helical transmembrane segment at 200–217 threads the bilayer; that stretch reads LVVMTTYYSAQVLISLSV. At 218 to 226 the chain is on the cytoplasmic side; it reads SQSPKLKPN.

The protein belongs to the TMEM86 family. Homodimer.

It localises to the endoplasmic reticulum membrane. Its subcellular location is the cytoplasm. It catalyses the reaction a 1-O-(1Z-alkenyl)-sn-glycero-3-phosphocholine + H2O = a 2,3-saturated aldehyde + sn-glycerol 3-phosphocholine. The catalysed reaction is a 1-O-(1Z-alkenyl)-sn-glycero-3-phosphoethanolamine + H2O = a 2,3-saturated aldehyde + sn-glycero-3-phosphoethanolamine. With respect to regulation, competitively inhibited by lysophosphatidic acid. Functionally, catalyzes the hydrolysis of the vinyl ether bond of choline or ethanolamine lysoplasmalogens, forming fatty aldehyde and glycerophosphocholine or glycerophosphoethanolamine, respectively and is specific for the sn-2-deacylated (lyso) form of plasmalogen. The sequence is that of Lysoplasmalogenase TMEM86B (TMEM86B) from Sus scrofa (Pig).